A 330-amino-acid polypeptide reads, in one-letter code: GMP reductase (330 aa).

The active-site Thioimidate intermediate is the C180. 209 to 232 provides a ligand contact to NADP(+); the sequence is LIADGGIRHNGDIAKSVRFGASMV.

It belongs to the IMPDH/GMPR family. GuaC type 2 subfamily.

It catalyses the reaction IMP + NH4(+) + NADP(+) = GMP + NADPH + 2 H(+). Catalyzes the irreversible NADPH-dependent deamination of GMP to IMP. It functions in the conversion of nucleobase, nucleoside and nucleotide derivatives of G to A nucleotides, and in maintaining the intracellular balance of A and G nucleotides. The sequence is that of GMP reductase from Lactobacillus johnsonii (strain CNCM I-12250 / La1 / NCC 533).